We begin with the raw amino-acid sequence, 488 residues long: Proline--tRNA ligase (488 aa).

This sequence belongs to the class-II aminoacyl-tRNA synthetase family. ProS type 3 subfamily. As to quaternary structure, homodimer.

It localises to the cytoplasm. The enzyme catalyses tRNA(Pro) + L-proline + ATP = L-prolyl-tRNA(Pro) + AMP + diphosphate. Functionally, catalyzes the attachment of proline to tRNA(Pro) in a two-step reaction: proline is first activated by ATP to form Pro-AMP and then transferred to the acceptor end of tRNA(Pro). Can inadvertently accommodate and process cysteine. This chain is Proline--tRNA ligase (proS), found in Borreliella burgdorferi (strain ATCC 35210 / DSM 4680 / CIP 102532 / B31) (Borrelia burgdorferi).